A 464-amino-acid chain; its full sequence is tRNA-2-methylthio-N(6)-dimethylallyladenosine synthase (464 aa).

Positions 19-135 (GSYWITTFGC…LENLLGKVDL (117 aa)) constitute an MTTase N-terminal domain. 6 residues coordinate [4Fe-4S] cluster: C28, C64, C98, C170, C174, and C177. Residues 156-394 (RESSICGWVN…DLVEKTARSR (239 aa)) enclose the Radical SAM core domain. One can recognise a TRAM domain in the interval 396-464 (QRYIDNIESV…PFSLTGELSL (69 aa)).

Belongs to the methylthiotransferase family. MiaB subfamily. Monomer. Requires [4Fe-4S] cluster as cofactor.

The protein resides in the cytoplasm. The enzyme catalyses N(6)-dimethylallyladenosine(37) in tRNA + (sulfur carrier)-SH + AH2 + 2 S-adenosyl-L-methionine = 2-methylsulfanyl-N(6)-dimethylallyladenosine(37) in tRNA + (sulfur carrier)-H + 5'-deoxyadenosine + L-methionine + A + S-adenosyl-L-homocysteine + 2 H(+). Functionally, catalyzes the methylthiolation of N6-(dimethylallyl)adenosine (i(6)A), leading to the formation of 2-methylthio-N6-(dimethylallyl)adenosine (ms(2)i(6)A) at position 37 in tRNAs that read codons beginning with uridine. This chain is tRNA-2-methylthio-N(6)-dimethylallyladenosine synthase, found in Prochlorococcus marinus (strain MIT 9301).